The sequence spans 441 residues: Signal recognition particle 54 kDa protein (441 aa).

Residues Gly-104–Thr-111, Asp-186–Arg-190, and Thr-244–Asp-247 each bind GTP.

It belongs to the GTP-binding SRP family. SRP54 subfamily. As to quaternary structure, part of the signal recognition particle protein translocation system, which is composed of SRP and FtsY. Archaeal SRP consists of a 7S RNA molecule of 300 nucleotides and two protein subunits: SRP54 and SRP19.

It is found in the cytoplasm. The enzyme catalyses GTP + H2O = GDP + phosphate + H(+). In terms of biological role, involved in targeting and insertion of nascent membrane proteins into the cytoplasmic membrane. Binds to the hydrophobic signal sequence of the ribosome-nascent chain (RNC) as it emerges from the ribosomes. The SRP-RNC complex is then targeted to the cytoplasmic membrane where it interacts with the SRP receptor FtsY. In Staphylothermus marinus (strain ATCC 43588 / DSM 3639 / JCM 9404 / F1), this protein is Signal recognition particle 54 kDa protein.